The sequence spans 341 residues: Phosphoribosylformylglycinamidine cyclo-ligase (341 aa).

This sequence belongs to the AIR synthase family.

It is found in the cytoplasm. It carries out the reaction 2-formamido-N(1)-(5-O-phospho-beta-D-ribosyl)acetamidine + ATP = 5-amino-1-(5-phospho-beta-D-ribosyl)imidazole + ADP + phosphate + H(+). The protein operates within purine metabolism; IMP biosynthesis via de novo pathway; 5-amino-1-(5-phospho-D-ribosyl)imidazole from N(2)-formyl-N(1)-(5-phospho-D-ribosyl)glycinamide: step 2/2. This chain is Phosphoribosylformylglycinamidine cyclo-ligase, found in Lachnoclostridium phytofermentans (strain ATCC 700394 / DSM 18823 / ISDg) (Clostridium phytofermentans).